Consider the following 189-residue polypeptide: Group XIIA secretory phospholipase A2 (189 aa).

Residues 1-22 (MALLSRPALTLLLLLMAAVVRC) form the signal peptide. 3 residues coordinate Ca(2+): Gly-88, Pro-90, and Phe-92. The active site involves His-110. Residue Asp-111 coordinates Ca(2+). The active site involves Asp-125.

It depends on Ca(2+) as a cofactor. As to expression, abundantly expressed in heart, skeletal muscle, kidney, liver and pancreas.

The protein resides in the secreted. It localises to the cytoplasm. It carries out the reaction a 1,2-diacyl-sn-glycero-3-phosphocholine + H2O = a 1-acyl-sn-glycero-3-phosphocholine + a fatty acid + H(+). Its function is as follows. PA2 catalyzes the calcium-dependent hydrolysis of the 2-acyl groups in 3-sn-phosphoglycerides. Does not exhibit detectable activity toward sn-2-arachidonoyl- or linoleoyl-phosphatidylcholine or -phosphatidylethanolamine. The protein is Group XIIA secretory phospholipase A2 (PLA2G12A) of Homo sapiens (Human).